The chain runs to 142 residues: Ribosome-binding factor A (142 aa).

A disordered region spans residues 119 to 142; the sequence is EAKQKQHGVETDAEQGDTKEEGDK.

Belongs to the RbfA family. Monomer. Binds 30S ribosomal subunits, but not 50S ribosomal subunits or 70S ribosomes.

Its subcellular location is the cytoplasm. Functionally, one of several proteins that assist in the late maturation steps of the functional core of the 30S ribosomal subunit. Associates with free 30S ribosomal subunits (but not with 30S subunits that are part of 70S ribosomes or polysomes). Required for efficient processing of 16S rRNA. May interact with the 5'-terminal helix region of 16S rRNA. The chain is Ribosome-binding factor A from Shewanella pealeana (strain ATCC 700345 / ANG-SQ1).